The chain runs to 293 residues: Ribosomal protein L11 methyltransferase (293 aa).

Threonine 145, glycine 166, aspartate 188, and asparagine 230 together coordinate S-adenosyl-L-methionine.

This sequence belongs to the methyltransferase superfamily. PrmA family.

It is found in the cytoplasm. It catalyses the reaction L-lysyl-[protein] + 3 S-adenosyl-L-methionine = N(6),N(6),N(6)-trimethyl-L-lysyl-[protein] + 3 S-adenosyl-L-homocysteine + 3 H(+). Functionally, methylates ribosomal protein L11. This is Ribosomal protein L11 methyltransferase from Salmonella heidelberg (strain SL476).